Consider the following 289-residue polypeptide: Iodotyrosine deiodinase 1 (289 aa).

A helical membrane pass occupies residues methionine 1–lysine 21. Residues lysine 29–glutamate 58 show a composition bias toward basic and acidic residues. Residues lysine 29–glutamate 69 form a disordered region. The segment covering glutamate 59–glutamate 69 has biased composition (acidic residues). FMN-binding positions include arginine 100 to arginine 104, serine 128, and serine 128 to glycine 129. Alanine 130, glutamate 157, tyrosine 161, and lysine 182 together coordinate 3-iodo-L-tyrosine. Residues threonine 237–threonine 239 and arginine 279 each bind FMN.

The protein belongs to the nitroreductase family. Homodimer. Requires FMN as cofactor. As to expression, expressed at a high level in thyroid gland (at protein level). Expressed at a high level in thyroid gland and at lower level in kidney and trachea.

Its subcellular location is the cell membrane. The protein localises to the cytoplasmic vesicle membrane. It carries out the reaction 2 iodide + L-tyrosine + 2 NADP(+) = 3,5-diiodo-L-tyrosine + 2 NADPH + H(+). The enzyme catalyses iodide + L-tyrosine + NADP(+) = 3-iodo-L-tyrosine + NADPH. The catalysed reaction is 3-iodo-L-tyrosine + iodide + NADP(+) = 3,5-diiodo-L-tyrosine + NADPH + H(+). It catalyses the reaction L-tyrosine + chloride + NADP(+) = 3-chloro-L-tyrosine + NADPH. It carries out the reaction bromide + L-tyrosine + NADP(+) = 3-bromo-L-tyrosine + NADPH. Functionally, catalyzes the dehalogenation of halotyrosines such as 3-bromo-L-tyrosine, 3-chloro-L-tyrosine, 3-iodo-L-tyrosine and 3,5-diiodo-L-tyrosine. During thyroid hormone biosynthesis, facilitates iodide salvage by catalysing the oxidative NADPH-dependent deiodination of the halogenated by-products of thyroid hormone production, monoiodotyrosine (L-MIT) and diiodotyrosine (L-DIT). The scavanged iodide can then reenter the hormone-producing pathways. Acts more efficiently on 3-iodo-L-tyrosine than 3,5-diiodo-L-tyrosine. The sequence is that of Iodotyrosine deiodinase 1 from Homo sapiens (Human).